The primary structure comprises 1280 residues: Papilin (1280 aa).

The first 20 residues, 1–20 (MQLFPLLFSLLLTSTPGSWA), serve as a signal peptide directing secretion. TSP type-1 domains follow at residues 27-81 (SDTW…ESCP), 305-362 (RGFS…QPCP), 363-422 (KTKR…ACNL), 424-482 (HCAV…EACP), and 485-540 (RGQA…QPCH). 3 disulfide bridges follow: cysteine 39-cysteine 75, cysteine 43-cysteine 80, and cysteine 54-cysteine 65. 3 cysteine pairs are disulfide-bonded: cysteine 425/cysteine 464, cysteine 436/cysteine 476, and cysteine 440/cysteine 481. 2 disordered regions span residues 541–626 (LPQE…DCRH) and 672–715 (PQQA…PSEC). Residues 585 to 599 (AQSNPREGQDPNLSS) show a composition bias toward polar residues. Residues 706–715 (QAHEGEPSEC) show a composition bias toward basic and acidic residues. 3 cysteine pairs are disulfide-bonded: cysteine 750/cysteine 800, cysteine 759/cysteine 783, and cysteine 775/cysteine 796. A BPTI/Kunitz inhibitor domain is found at 750-800 (CLLPSAQGSCGDWAARWYFVASVGRCNRFWYGGCHGNANNFASEQECMNTC). The segment at 800–902 (CRGQHGPRRP…AVPPTHSPSY (103 aa)) is disordered. Residues 879-891 (IRPRVPGLDREAR) are compositionally biased toward basic and acidic residues. One can recognise an Ig-like C2-type 1 domain in the interval 900–990 (PSYRIRLAGS…EPQEIQLRVT (91 aa)). The cysteines at positions 926 and 973 are disulfide-linked. A compositionally biased stretch (basic and acidic residues) spans 1002–1012 (PRHFPEPRNPD). A disordered region spans residues 1002 to 1042 (PRHFPEPRNPDLGHGPPHRGTGAEAGGHRVLSPSHPRPATR). 2 Ig-like C2-type domains span residues 1039–1128 (PATR…VQLR) and 1133–1218 (LTIT…TEVK). Disulfide bonds link cysteine 1065/cysteine 1112 and cysteine 1154/cysteine 1202. Residues 1231–1270 (LGKDCIDQPELANCALILQAQLCGNEYYSSFCCASCSRFQ) enclose the PLAC domain.

Belongs to the papilin family.

The protein resides in the secreted. The protein is Papilin (Papln) of Mus musculus (Mouse).